The following is a 272-amino-acid chain: ATP synthase subunit a (272 aa).

5 helical membrane-spanning segments follow: residues 41–61, 102–122, 147–167, 212–232, and 243–263; these read TLNIDSMFFSVVLGLIFLALF, IAPLALTIFVWVFLMNLMDLV, DVNITLSMALGVFILILFYSI, LFGNMYAGELIFILIAGLLPW, and AIFHILIITLQAFIFMVLTIV.

It belongs to the ATPase A chain family. F-type ATPases have 2 components, CF(1) - the catalytic core - and CF(0) - the membrane proton channel. CF(1) has five subunits: alpha(3), beta(3), gamma(1), delta(1), epsilon(1). CF(0) has three main subunits: a(1), b(2) and c(9-12). The alpha and beta chains form an alternating ring which encloses part of the gamma chain. CF(1) is attached to CF(0) by a central stalk formed by the gamma and epsilon chains, while a peripheral stalk is formed by the delta and b chains.

It is found in the cell inner membrane. Functionally, key component of the proton channel; it plays a direct role in the translocation of protons across the membrane. The chain is ATP synthase subunit a from Edwardsiella ictaluri (strain 93-146).